The following is a 347-amino-acid chain: Protein YIPF3 (347 aa).

Positions Met-1–Ser-31 are disordered. Position 2 is an N-acetylalanine; in Protein YIPF3, N-terminally processed (Ala-2). The Cytoplasmic portion of the chain corresponds to Ala-2–Lys-145. Residues Val-146–His-166 form a helical membrane-spanning segment. Topologically, residues Gly-167–Ala-184 are lumenal. Residues Ile-185–Leu-205 traverse the membrane as a helical segment. At Cys-206 to Thr-211 the chain is on the cytoplasmic side. The chain crosses the membrane as a helical span at residues Met-212–Tyr-234. Over Asn-235–His-237 the chain is Lumenal. The chain crosses the membrane as a helical span at residues Leu-238–Val-260. At Leu-261–Arg-271 the chain is on the cytoplasmic side. Residues Leu-272 to Ala-292 traverse the membrane as a helical segment. At Tyr-293 to His-347 the chain is on the lumenal side. N-linked (GlcNAc...) asparagine glycosylation occurs at Asn-334.

It belongs to the YIP1 family. As to quaternary structure, interacts with YIPF4 and YIPF5. As to expression, expressed by splenocytes (at protein level).

Its subcellular location is the cell membrane. It localises to the golgi apparatus. The protein localises to the cis-Golgi network membrane. The protein resides in the cytoplasm. In terms of biological role, involved in the maintenance of the Golgi structure. May play a role in hematopoiesis. The sequence is that of Protein YIPF3 (Yipf3) from Mus musculus (Mouse).